A 382-amino-acid chain; its full sequence is Galactokinase (382 aa).

34 to 37 (EHTD) contributes to the substrate binding site. Position 124-130 (124-130 (GAGLSSS)) interacts with ATP. The Mg(2+) site is built by serine 130 and glutamate 162. The active-site Proton acceptor is the aspartate 174. Tyrosine 223 is a substrate binding site.

Belongs to the GHMP kinase family. GalK subfamily.

It is found in the cytoplasm. It catalyses the reaction alpha-D-galactose + ATP = alpha-D-galactose 1-phosphate + ADP + H(+). The protein operates within carbohydrate metabolism; galactose metabolism. Functionally, catalyzes the transfer of the gamma-phosphate of ATP to D-galactose to form alpha-D-galactose-1-phosphate (Gal-1-P). The sequence is that of Galactokinase from Salmonella agona (strain SL483).